We begin with the raw amino-acid sequence, 180 residues long: MNRPESIYDLLLAPLTLSLIFGGIGVVLLTNIIYSALSLGLVLICISFFYIILNADFVAVAQILIYIGAVNILILFAVMLMNNPKYPNYAPPWTVGDSISSIVCTSLFCSLITIILNISWFGISLTQKSDQMLERDLTNNIQRIGAHLSTDFFLPFELISIILLVALIGAITIARREETV.

A run of 5 helical transmembrane segments spans residues 10 to 30 (LLLA…VLLT), 32 to 52 (IIYS…FYII), 57 to 77 (FVAV…ILFA), 102 to 122 (IVCT…SWFG), and 153 to 173 (FLPF…AITI).

It belongs to the complex I subunit 6 family. As to quaternary structure, NDH is composed of at least 16 different subunits, 5 of which are encoded in the nucleus.

Its subcellular location is the plastid. The protein localises to the chloroplast thylakoid membrane. It carries out the reaction a plastoquinone + NADH + (n+1) H(+)(in) = a plastoquinol + NAD(+) + n H(+)(out). The catalysed reaction is a plastoquinone + NADPH + (n+1) H(+)(in) = a plastoquinol + NADP(+) + n H(+)(out). NDH shuttles electrons from NAD(P)H:plastoquinone, via FMN and iron-sulfur (Fe-S) centers, to quinones in the photosynthetic chain and possibly in a chloroplast respiratory chain. The immediate electron acceptor for the enzyme in this species is believed to be plastoquinone. Couples the redox reaction to proton translocation, and thus conserves the redox energy in a proton gradient. In Cryptomeria japonica (Japanese cedar), this protein is NAD(P)H-quinone oxidoreductase subunit 6, chloroplastic (ndhG).